The chain runs to 399 residues: Acetate kinase (399 aa).

N8 contacts Mg(2+). K15 is a binding site for ATP. Substrate is bound at residue R89. D146 functions as the Proton donor/acceptor in the catalytic mechanism. ATP contacts are provided by residues 206–210 (HVGNG), 283–285 (DMR), and 331–335 (GMGEN). E383 lines the Mg(2+) pocket.

It belongs to the acetokinase family. Homodimer. It depends on Mg(2+) as a cofactor. The cofactor is Mn(2+).

The protein localises to the cytoplasm. The catalysed reaction is acetate + ATP = acetyl phosphate + ADP. The protein operates within metabolic intermediate biosynthesis; acetyl-CoA biosynthesis; acetyl-CoA from acetate: step 1/2. Functionally, catalyzes the formation of acetyl phosphate from acetate and ATP. Can also catalyze the reverse reaction. The polypeptide is Acetate kinase (Streptococcus equi subsp. equi (strain 4047)).